We begin with the raw amino-acid sequence, 1286 residues long: Structural maintenance of chromosomes protein 4 (1286 aa).

The tract at residues 1-51 is disordered; sequence MRRKGTKPSTACHQEEGPPPSQDGAHSDEEMEQPAGEAESAAPAKPPGEEL. 3 positions are modified to phosphoserine: S21, S27, and S40. 111 to 118 provides a ligand contact to ATP; the sequence is GPNGSGKS. Position 141 is a phosphoserine (S141). Residues 270–589 are a coiled coil; that stretch reads RRVEILNEHR…KVEEAKSSLA (320 aa). An N6-acetyllysine mark is found at K379 and K677. In terms of domain architecture, SMC hinge spans 611–725; that stretch reads PGIYGRLGDL…ANNLDQATRV (115 aa). Coiled-coil stretches lie at residues 768 to 1018 and 1068 to 1133; these read EISV…KLEQ and ESIT…LNEF. A Phosphoserine modification is found at S980.

It belongs to the SMC family. SMC4 subfamily. Forms a heterodimer with SMC2. Component of the condensin complex, which contains the SMC2 and SMC4 heterodimer, and three non SMC subunits that probably regulate the complex: BRRN1/CAPH, CNAP1/CAPD2 and CAPG.

It localises to the nucleus. It is found in the cytoplasm. The protein localises to the chromosome. Its function is as follows. Central component of the condensin complex, a complex required for conversion of interphase chromatin into mitotic-like condense chromosomes. The condensin complex probably introduces positive supercoils into relaxed DNA in the presence of type I topoisomerases and converts nicked DNA into positive knotted forms in the presence of type II topoisomerases. The protein is Structural maintenance of chromosomes protein 4 (Smc4) of Mus musculus (Mouse).